Here is a 305-residue protein sequence, read N- to C-terminus: UDP-3-O-acyl-N-acetylglucosamine deacetylase (305 aa).

Zn(2+) is bound by residues histidine 78, histidine 237, and aspartate 241. The Proton donor role is filled by histidine 264.

This sequence belongs to the LpxC family. Zn(2+) serves as cofactor.

It carries out the reaction a UDP-3-O-[(3R)-3-hydroxyacyl]-N-acetyl-alpha-D-glucosamine + H2O = a UDP-3-O-[(3R)-3-hydroxyacyl]-alpha-D-glucosamine + acetate. It participates in glycolipid biosynthesis; lipid IV(A) biosynthesis; lipid IV(A) from (3R)-3-hydroxytetradecanoyl-[acyl-carrier-protein] and UDP-N-acetyl-alpha-D-glucosamine: step 2/6. Catalyzes the hydrolysis of UDP-3-O-myristoyl-N-acetylglucosamine to form UDP-3-O-myristoylglucosamine and acetate, the committed step in lipid A biosynthesis. The chain is UDP-3-O-acyl-N-acetylglucosamine deacetylase from Paraburkholderia phytofirmans (strain DSM 17436 / LMG 22146 / PsJN) (Burkholderia phytofirmans).